The following is a 1260-amino-acid chain: Methionine synthase (1260 aa).

The 321-residue stretch at 13–333 (FGIIRKILSE…DHIRAFCNAI (321 aa)) folds into the Hcy-binding domain. Zn(2+)-binding residues include cysteine 255, cysteine 318, and cysteine 319. Residues 364–625 (FVNVGERCNV…IPKDLLKLVE (262 aa)) enclose the Pterin-binding domain. In terms of domain architecture, B12-binding N-terminal spans 655–749 (EVEEWRNKPV…FMEEEKRLKR (95 aa)). Methylcob(III)alamin-binding positions include glutamate 699, 775–779 (GDVHD), histidine 778, serine 823, threonine 827, and alanine 879. One can recognise a B12-binding domain in the interval 766 to 883 (GVVVLATVKG…VHVLDASRSV (118 aa)). Residues 916 to 1256 (SLKDRKYTSL…LSSILSYDRL (341 aa)) form the AdoMet activation domain. Residues aspartate 966, arginine 1163, and 1218-1219 (YF) contribute to the S-adenosyl-L-methionine site.

The protein belongs to the vitamin-B12 dependent methionine synthase family. The cofactor is methylcob(III)alamin. Zn(2+) is required as a cofactor.

It catalyses the reaction (6S)-5-methyl-5,6,7,8-tetrahydrofolate + L-homocysteine = (6S)-5,6,7,8-tetrahydrofolate + L-methionine. It functions in the pathway amino-acid biosynthesis; L-methionine biosynthesis via de novo pathway; L-methionine from L-homocysteine (MetH route): step 1/1. In terms of biological role, catalyzes the transfer of a methyl group from methyl-cobalamin to homocysteine, yielding enzyme-bound cob(I)alamin and methionine. Subsequently, remethylates the cofactor using methyltetrahydrofolate. In Dictyostelium discoideum (Social amoeba), this protein is Methionine synthase (mtr).